Here is a 389-residue protein sequence, read N- to C-terminus: 1-deoxy-D-xylulose 5-phosphate reductoisomerase (389 aa).

NADPH is bound by residues Thr-10, Gly-11, Ser-12, Ile-13, Asn-38, and Asn-122. A 1-deoxy-D-xylulose 5-phosphate-binding site is contributed by Lys-123. NADPH is bound at residue Glu-124. Residue Asp-148 coordinates Mn(2+). Ser-149, Glu-150, Ser-173, and His-196 together coordinate 1-deoxy-D-xylulose 5-phosphate. Glu-150 serves as a coordination point for Mn(2+). Gly-202 lines the NADPH pocket. 1-deoxy-D-xylulose 5-phosphate is bound by residues Ser-209, Asn-214, Lys-215, and Glu-218. A Mn(2+)-binding site is contributed by Glu-218.

This sequence belongs to the DXR family. Requires Mg(2+) as cofactor. The cofactor is Mn(2+).

It carries out the reaction 2-C-methyl-D-erythritol 4-phosphate + NADP(+) = 1-deoxy-D-xylulose 5-phosphate + NADPH + H(+). It participates in isoprenoid biosynthesis; isopentenyl diphosphate biosynthesis via DXP pathway; isopentenyl diphosphate from 1-deoxy-D-xylulose 5-phosphate: step 1/6. In terms of biological role, catalyzes the NADPH-dependent rearrangement and reduction of 1-deoxy-D-xylulose-5-phosphate (DXP) to 2-C-methyl-D-erythritol 4-phosphate (MEP). This Wolbachia sp. subsp. Brugia malayi (strain TRS) protein is 1-deoxy-D-xylulose 5-phosphate reductoisomerase.